The sequence spans 437 residues: Na(+)/H(+) antiporter NhaA (437 aa).

11 helical membrane-spanning segments follow: residues 12–32 (SMNI…AVIA), 65–85 (LTMI…MVGL), 103–123 (ALPF…YSMV), 133–153 (GLAI…SLLG), 162–182 (IFLT…IAIF), 186–206 (HVAY…YFIG), 214–234 (IFFL…GIHS), 308–328 (GAVN…VMFS), 333–353 (VIGG…FLGI), 377–397 (ISGV…IANL), and 412–432 (LGVL…LHWV).

Belongs to the NhaA Na(+)/H(+) (TC 2.A.33) antiporter family.

Its subcellular location is the cell inner membrane. The catalysed reaction is Na(+)(in) + 2 H(+)(out) = Na(+)(out) + 2 H(+)(in). Na(+)/H(+) antiporter that extrudes sodium in exchange for external protons. The protein is Na(+)/H(+) antiporter NhaA of Bacteroides fragilis (strain ATCC 25285 / DSM 2151 / CCUG 4856 / JCM 11019 / LMG 10263 / NCTC 9343 / Onslow / VPI 2553 / EN-2).